Reading from the N-terminus, the 258-residue chain is MGKTIVFKCGGSVIRELSDEFFQNLKDLTESGWKIALVHGGGPDITKMLKKLNIRTEFVNGQRKTTKAVLEVAEMVLSGSINKFFVAELTKHGLPAVGVSGKDGGLLLADYLNEKEYGQVGRIKKVNGQMAEALMEKGFIPVIAPLSMTDGCETLNVNADLAASAVAAALRADKLMFVTDVKGIMKNEEMLKELTPEDIESLIAEGVISGGMIPKVHSAKEALTDEVEEVMIVSGKGSFLTKDDFIGTKIIKQKEAVS.

Substrate-binding positions include 41–42, arginine 63, and asparagine 156; that span reads GG.

It belongs to the acetylglutamate kinase family. ArgB subfamily.

It is found in the cytoplasm. It carries out the reaction N-acetyl-L-glutamate + ATP = N-acetyl-L-glutamyl 5-phosphate + ADP. The protein operates within amino-acid biosynthesis; L-arginine biosynthesis; N(2)-acetyl-L-ornithine from L-glutamate: step 2/4. In terms of biological role, catalyzes the ATP-dependent phosphorylation of N-acetyl-L-glutamate. This is Acetylglutamate kinase from Bacillus licheniformis (strain ATCC 14580 / DSM 13 / JCM 2505 / CCUG 7422 / NBRC 12200 / NCIMB 9375 / NCTC 10341 / NRRL NRS-1264 / Gibson 46).